Here is an 899-residue protein sequence, read N- to C-terminus: AP-3 complex subunit delta (899 aa).

HEAT repeat units lie at residues Gln-37–Tyr-74, Glu-155–Glu-192, Leu-194–Gln-229, Phe-231–Lys-267, Leu-268–Asp-305, Asp-308–Thr-344, Asp-345–Leu-382, Asp-384–Met-428, Arg-480–Asn-518, Glu-536–Ser-580, Ser-590–Leu-613, and Leu-614–Glu-656. Disordered stretches follow at residues Asp-668–Glu-701, Asn-741–Lys-768, Gly-782–Asn-801, and Ala-849–Glu-899. A compositionally biased stretch (low complexity) spans Ser-743–Glu-759. The stretch at Gln-841 to Arg-862 forms a coiled coil. The segment covering Val-857 to Pro-880 has biased composition (basic residues).

It belongs to the adaptor complexes large subunit family. In terms of assembly, adaptor protein complex 3 (AP-3) is a heterotetramer composed of 2 large adaptins (APL5 and APL6), a medium adaptin (APM3) and a small adaptin (APS3).

It is found in the golgi apparatus. The protein resides in the cytoplasmic vesicle. Its subcellular location is the clathrin-coated vesicle membrane. Part of the AP-3 complex, an adaptor-related complex which is not clathrin-associated. The complex is associated with the Golgi region as well as more peripheral structures. It facilitates the budding of vesicles from the Golgi membrane and may be directly involved in trafficking to the vacuole. The sequence is that of AP-3 complex subunit delta (APL5) from Eremothecium gossypii (strain ATCC 10895 / CBS 109.51 / FGSC 9923 / NRRL Y-1056) (Yeast).